Consider the following 318-residue polypeptide: Chlorophyllase-2 (318 aa).

The short motif at 136 to 140 (GHSRG) is the GXSXG element. Catalysis depends on Ser-138, which acts as the Nucleophile. Active-site charge relay system residues include Asp-167 and His-244.

It belongs to the AB hydrolase superfamily. Lipase family. Expressed in leaves, flowers and flower buds, but not in roots.

It is found in the cytoplasm. The protein localises to the cytosol. The catalysed reaction is a chlorophyll + H2O = a chlorophyllide + phytol + H(+). The enzyme catalyses chlorophyll a + H2O = phytol + chlorophyllide a + H(+). It functions in the pathway porphyrin-containing compound metabolism; chlorophyll degradation. Functionally, catalyzes the hydrolysis of ester bond in chlorophyll to yield chlorophyllide and phytol. Does not seem to be required for chlorophyll degradation during senescence. The protein is Chlorophyllase-2 of Arabidopsis thaliana (Mouse-ear cress).